Consider the following 59-residue polypeptide: Movement protein TGBp3 (59 aa).

Topologically, residues 1–3 (MHL) are lumenal. The helical transmembrane segment at 4–21 (AIVGALTLVLTLFVLHYT) threads the bilayer. Residues 22–59 (TKDDRCYILINGHSAFTNCPASPDLAKVISQLKPHNHG) lie on the Cytoplasmic side of the membrane.

This sequence belongs to the Tymovirales TGBp3 protein family.

It is found in the host endoplasmic reticulum membrane. In terms of biological role, plays a role in viral cell-to-cell propagation, by facilitating genome transport to neighboring plant cells through plasmosdesmata. May induce the formation of granular vesicles derived from the Endoplasmic reticulum, which align on actin filaments. The protein is Movement protein TGBp3 of Chenopodium album (Fat hen).